The chain runs to 131 residues: Holin-like protein CidA (131 aa).

Transmembrane regions (helical) follow at residues V4–G24, I30–Q50, F65–A85, and I88–L108.

It belongs to the CidA/LrgA family. CidA subfamily.

Its subcellular location is the cell membrane. In terms of biological role, increases the activity of extracellular murein hydrolases possibly by mediating their export via hole formation. Inhibited by the antiholin-like proteins LrgAB. In an unstressed cell, the LrgAB products probably inhibit the function of the CidAB proteins. When a cell is stressed by the addition of antibiotics or by other factors in the environment, the CidAB proteins possibly oligomerize within the bacterial cell membrane, creating lesions that disrupt the proton motive force, which in turn results in loss of cell viability. These lesions are also hypothesized to regulate the subsequent cell lysis by either allowing the murein hydrolases access to the cell wall substrate and/or regulating their activity by a possible change in the cell wall pH that results from loss of membrane potential. This Staphylococcus aureus (strain Mu3 / ATCC 700698) protein is Holin-like protein CidA.